Here is a 135-residue protein sequence, read N- to C-terminus: uncharacterized protein (135 aa).

3 consecutive transmembrane segments (helical) span residues 13–35 (AKVI…AMYL), 82–101 (VAVF…LLSI), and 108–130 (IYRI…PLIL).

The protein resides in the cell membrane. This is an uncharacterized protein from Archaeoglobus fulgidus (strain ATCC 49558 / DSM 4304 / JCM 9628 / NBRC 100126 / VC-16).